We begin with the raw amino-acid sequence, 539 residues long: Zinc finger and BTB domain-containing protein 7B (539 aa).

Residues 34-115 enclose the BTB domain; sequence CDLTIRTQGL…AYTATLTTSS (82 aa). A Phosphoserine modification is found at Ser150. Residues 171 to 308 are disordered; the sequence is ASGVPNGEDS…SPEELGSDED (138 aa). Residues 182-196 are compositionally biased toward pro residues; sequence PQVPLPPPPPPPPRP. The span at 197–206 shows a compositional bias: basic residues; sequence VARRSRKPRK. 2 positions are modified to N6-acetyllysine; by EP300; alternate: Lys206 and Lys212. Glycyl lysine isopeptide (Lys-Gly) (interchain with G-Cter in ubiquitin); alternate cross-links involve residues Lys206 and Lys212. Over residues 273 to 282 the composition is skewed to acidic residues; it reads YEGEEEEEEL. Lys335 is modified (N6-acetyllysine; by EP300; alternate). Lys335 participates in a covalent cross-link: Glycyl lysine isopeptide (Lys-Gly) (interchain with G-Cter in ubiquitin); alternate. The segment at 344 to 400 is required for interaction with and acetylation by EP300; that stretch reads MPQECPVCHKIIHGAGKLPRHMRTHTGEKPFACEVCGVRFTRNDKLKIHMRKHTGER. A C2H2-type 1 zinc finger spans residues 346–368; it reads QECPVCHKIIHGAGKLPRHMRTH. Thr369 bears the Phosphothreonine mark. C2H2-type zinc fingers lie at residues 374 to 396 and 402 to 424; these read FACE…MRKH and YSCP…MHLH. The C2H2-type 4; atypical zinc-finger motif lies at 430-454; it reads YECHLCHKAFAKEDHLQRHLKGQNC. Disordered regions lie at residues 458–486 and 501–539; these read RTRR…GLDL and FWEQ…MESS. The segment covering 508–517 has biased composition (pro residues); sequence TGPPVSTPGP.

Homodimerizes. Interacts with NCL, NEDD4 and YBX1. Interacts with HNRNPU (via RNA-binding RGG-box region); the interaction facilitates the recruitment of long non-coding RNA Blnc1 by ZBTB7B. Interacts with HDAC4 and HDAC5; the interaction allows the recruitment of HDAC4 and HDAC5 on CD8 loci for deacetylation and possible inhibition of CD8 genes expression. Post-translationally, acetylated directly and specifically by EP300. EP300-mediated acetylation of Lys-206, Lys-212 and Lys-335 stabilizes the protein by antagonizing ubiquitin conjugation. In terms of processing, ubiquitinated, leading to proteasomal degradation. Competes with acetylation on Lys-206, Lys-212 and Lys-335.

Its subcellular location is the nucleus. In terms of biological role, transcription regulator that acts as a key regulator of lineage commitment of immature T-cell precursors. Exerts distinct biological functions in the mammary epithelial cells and T cells in a tissue-specific manner. Necessary and sufficient for commitment of CD4 lineage, while its absence causes CD8 commitment. Development of immature T-cell precursors (thymocytes) to either the CD4 helper or CD8 killer T-cell lineages correlates precisely with their T-cell receptor specificity for major histocompatibility complex class II or class I molecules, respectively. Cross-antagonism between ZBTB7B and CBF complexes are determinative to CD4 versus CD8 cell fate decision. Suppresses RUNX3 expression and imposes CD4+ lineage fate by inducing the SOCS suppressors of cytokine signaling. induces, as a transcriptional activator, SOCS genes expression which represses RUNX3 expression and promotes the CD4+ lineage fate. During CD4 lineage commitment, associates with multiple sites at the CD8 locus, acting as a negative regulator of the CD8 promoter and enhancers by epigenetic silencing through the recruitment of class II histone deacetylases, such as HDAC4 and HDAC5, to these loci. Regulates the development of IL17-producing CD1d-restricted naural killer (NK) T cells. Also functions as an important metabolic regulator in the lactating mammary glands. Critical feed-forward regulator of insulin signaling in mammary gland lactation, directly regulates expression of insulin receptor substrate-1 (IRS-1) and insulin-induced Akt-mTOR-SREBP signaling. Transcriptional repressor of the collagen COL1A1 and COL1A2 genes. May also function as a repressor of fibronectin and possibly other extracellular matrix genes. Potent driver of brown fat development, thermogenesis and cold-induced beige fat formation. Recruits the brown fat lncRNA 1 (Blnc1):HNRNPU ribonucleoprotein complex to activate thermogenic gene expression in brown and beige adipocytes. The sequence is that of Zinc finger and BTB domain-containing protein 7B from Homo sapiens (Human).